Reading from the N-terminus, the 226-residue chain is Uracil-DNA glycosylase (226 aa).

The active-site Proton acceptor is Asp-65.

The protein belongs to the uracil-DNA glycosylase (UDG) superfamily. UNG family.

The protein resides in the cytoplasm. The catalysed reaction is Hydrolyzes single-stranded DNA or mismatched double-stranded DNA and polynucleotides, releasing free uracil.. Excises uracil residues from the DNA which can arise as a result of misincorporation of dUMP residues by DNA polymerase or due to deamination of cytosine. The polypeptide is Uracil-DNA glycosylase (Bacillus pumilus (strain SAFR-032)).